Consider the following 378-residue polypeptide: Homoserine O-acetyltransferase (378 aa).

The 286-residue stretch at 52–337 (NAILICHALT…YSQHGHDTFL (286 aa)) folds into the AB hydrolase-1 domain. The active-site Nucleophile is S148. R217 provides a ligand contact to substrate. Catalysis depends on residues D304 and H333. D334 is a binding site for substrate.

This sequence belongs to the AB hydrolase superfamily. MetX family. In terms of assembly, homodimer.

The protein localises to the cytoplasm. It catalyses the reaction L-homoserine + acetyl-CoA = O-acetyl-L-homoserine + CoA. Its pathway is amino-acid biosynthesis; L-methionine biosynthesis via de novo pathway; O-acetyl-L-homoserine from L-homoserine: step 1/1. In terms of biological role, transfers an acetyl group from acetyl-CoA to L-homoserine, forming acetyl-L-homoserine. This is Homoserine O-acetyltransferase from Chloroherpeton thalassium (strain ATCC 35110 / GB-78).